The sequence spans 258 residues: Type III pantothenate kinase (258 aa).

Residue 6–13 (DVGNTNTV) coordinates ATP. Substrate is bound by residues tyrosine 100 and 107–110 (GADR). Catalysis depends on aspartate 109, which acts as the Proton acceptor. Position 129 (aspartate 129) interacts with K(+). Threonine 132 contributes to the ATP binding site. Threonine 184 contacts substrate.

Belongs to the type III pantothenate kinase family. Homodimer. Requires NH4(+) as cofactor. K(+) serves as cofactor.

Its subcellular location is the cytoplasm. It carries out the reaction (R)-pantothenate + ATP = (R)-4'-phosphopantothenate + ADP + H(+). The protein operates within cofactor biosynthesis; coenzyme A biosynthesis; CoA from (R)-pantothenate: step 1/5. Not regulated by feedback inhibition by CoA and its thioesters as described for many other pantothenate kinases. Not inhibited by N-pentylpantothenamide (N5-Pan), and this compound cannot act as a substrate either. In terms of biological role, catalyzes the phosphorylation of pantothenate (Pan), the first step in CoA biosynthesis. Cannot utilize a phosphoryl donor other than ATP. The sequence is that of Type III pantothenate kinase (coaX) from Bacillus subtilis (strain 168).